The chain runs to 109 residues: MLEPFQILSICSFILSALHFMAWTIGHLNQIKRGVNMKIRIKGPNKETINREVSILRHSYQKEIQAKETMKEVLSDNMEVLSDHIVIEGLSAEEIIKMGETVLEIEELH.

Topologically, residues 1 to 4 are virion surface; sequence MLEP. The chain crosses the membrane as a helical; Signal-anchor for type III membrane protein span at residues 5–27; it reads FQILSICSFILSALHFMAWTIGH. The Intravirion segment spans residues 28–109; sequence LNQIKRGVNM…ETVLEIEELH (82 aa). Residues 58–83 are a coiled coil; it reads HSYQKEIQAKETMKEVLSDNMEVLSD.

In terms of assembly, homotetramer. Post-translationally, phosphorylated by host.

The protein resides in the virion membrane. Its subcellular location is the host cell membrane. Forms presumably a highly low-pH gated proton-selective channel. Trp-23 may function as a minimalistic gate that opens and closes the pore. When the environmental pH is lower than a threshold, the BM2 channel would be activated and selectively transport protons across the membrane from the extracellular side to the cytoplasmic side. Crucial for the uncoating process. When the virion is internalized into the endosome, the channel acidifies the virion's interior, promoting the dissociation of matrix protein 1 (M1) from the ribonucleoprotein (RNP) thus allowing the transport of the RNP from the virion into the cell's nucleus. Also plays a role in viral proteins secretory pathway. Elevates the intravesicular pH of normally acidic compartments, such as trans-Golgi network, preventing newly formed hemagglutinin from premature switching to the fusion-active conformation. Plays a crucial role in virion assembly. Expressed in the late phase of the infection. In Influenza B virus (strain B/Memphis/12/1997), this protein is Matrix protein 2 (M).